The chain runs to 324 residues: Glyoxylate/hydroxypyruvate reductase B (324 aa).

Catalysis depends on residues Arg237 and Glu266. His285 acts as the Proton donor in catalysis.

Belongs to the D-isomer specific 2-hydroxyacid dehydrogenase family. GhrB subfamily. Homodimer.

The protein localises to the cytoplasm. It carries out the reaction glycolate + NADP(+) = glyoxylate + NADPH + H(+). The enzyme catalyses (R)-glycerate + NAD(+) = 3-hydroxypyruvate + NADH + H(+). The catalysed reaction is (R)-glycerate + NADP(+) = 3-hydroxypyruvate + NADPH + H(+). Functionally, catalyzes the NADPH-dependent reduction of glyoxylate and hydroxypyruvate into glycolate and glycerate, respectively. In Shigella boydii serotype 18 (strain CDC 3083-94 / BS512), this protein is Glyoxylate/hydroxypyruvate reductase B.